The primary structure comprises 229 residues: Orotidine 5'-phosphate decarboxylase (229 aa).

Substrate-binding positions include aspartate 10, lysine 32, 59–68, threonine 119, arginine 180, glutamine 189, glycine 209, and arginine 210; that span reads DLKFHDIPNT. The active-site Proton donor is lysine 61.

The protein belongs to the OMP decarboxylase family. Type 1 subfamily. As to quaternary structure, homodimer.

It carries out the reaction orotidine 5'-phosphate + H(+) = UMP + CO2. The protein operates within pyrimidine metabolism; UMP biosynthesis via de novo pathway; UMP from orotate: step 2/2. Functionally, catalyzes the decarboxylation of orotidine 5'-monophosphate (OMP) to uridine 5'-monophosphate (UMP). The sequence is that of Orotidine 5'-phosphate decarboxylase from Legionella pneumophila (strain Lens).